Consider the following 613-residue polypeptide: Dihydroxy-acid dehydratase (613 aa).

A Mg(2+)-binding site is contributed by D81. C122 provides a ligand contact to [2Fe-2S] cluster. Residues D123 and K124 each contribute to the Mg(2+) site. The residue at position 124 (K124) is an N6-carboxylysine. C193 lines the [2Fe-2S] cluster pocket. E489 lines the Mg(2+) pocket. S515 (proton acceptor) is an active-site residue.

The protein belongs to the IlvD/Edd family. As to quaternary structure, homodimer. Requires [2Fe-2S] cluster as cofactor. Mg(2+) is required as a cofactor.

The catalysed reaction is (2R)-2,3-dihydroxy-3-methylbutanoate = 3-methyl-2-oxobutanoate + H2O. It carries out the reaction (2R,3R)-2,3-dihydroxy-3-methylpentanoate = (S)-3-methyl-2-oxopentanoate + H2O. The protein operates within amino-acid biosynthesis; L-isoleucine biosynthesis; L-isoleucine from 2-oxobutanoate: step 3/4. It functions in the pathway amino-acid biosynthesis; L-valine biosynthesis; L-valine from pyruvate: step 3/4. Functionally, functions in the biosynthesis of branched-chain amino acids. Catalyzes the dehydration of (2R,3R)-2,3-dihydroxy-3-methylpentanoate (2,3-dihydroxy-3-methylvalerate) into 2-oxo-3-methylpentanoate (2-oxo-3-methylvalerate) and of (2R)-2,3-dihydroxy-3-methylbutanoate (2,3-dihydroxyisovalerate) into 2-oxo-3-methylbutanoate (2-oxoisovalerate), the penultimate precursor to L-isoleucine and L-valine, respectively. This Pseudomonas fluorescens (strain ATCC BAA-477 / NRRL B-23932 / Pf-5) protein is Dihydroxy-acid dehydratase.